We begin with the raw amino-acid sequence, 386 residues long: Methionine aminopeptidase 1 (386 aa).

Alanine 2 carries the N-acetylalanine modification. The segment at 6 to 59 (TRVCETDGCSSEAKLQCPTCIKLGIQGSYFCSQECFKGSWATHKLLHKKAKDEK) adopts a C6H2-type zinc-finger fold. The Zn(2+) site is built by cysteine 9, cysteine 14, cysteine 22, cysteine 25, cysteine 36, cysteine 40, histidine 48, and histidine 52. Histidine 203 lines the a protein pocket. Positions 220, 231, and 294 each coordinate Zn(2+). Histidine 301 contributes to the a protein binding site. Positions 327 and 358 each coordinate Zn(2+).

It belongs to the peptidase M24A family. Methionine aminopeptidase type 1 subfamily. As to quaternary structure, associates with the 60S ribosomal subunit of the 80S translational complex. Zn(2+) serves as cofactor. Requires Co(2+) as cofactor. It depends on Mn(2+) as a cofactor. Fe(2+) is required as a cofactor.

Its subcellular location is the cytoplasm. The enzyme catalyses Release of N-terminal amino acids, preferentially methionine, from peptides and arylamides.. In terms of biological role, cotranslationally removes the N-terminal methionine from nascent proteins. The N-terminal methionine is often cleaved when the second residue in the primary sequence is small and uncharged (Met-Ala-, Cys, Gly, Pro, Ser, Thr, or Val). Required for normal progression through the cell cycle. The polypeptide is Methionine aminopeptidase 1 (METAP1) (Homo sapiens (Human)).